Reading from the N-terminus, the 384-residue chain is 1-deoxy-D-xylulose 5-phosphate reductoisomerase (384 aa).

Positions 10, 11, 12, 13, 37, 38, and 124 each coordinate NADPH. Lys-125 lines the 1-deoxy-D-xylulose 5-phosphate pocket. Residue Glu-126 participates in NADPH binding. Asp-150 contacts Mn(2+). The 1-deoxy-D-xylulose 5-phosphate site is built by Ser-151, Glu-152, Ser-176, and His-199. Glu-152 contacts Mn(2+). Gly-205 is a binding site for NADPH. 1-deoxy-D-xylulose 5-phosphate-binding residues include Ser-212, Asn-217, Lys-218, and Glu-221. A Mn(2+)-binding site is contributed by Glu-221.

The protein belongs to the DXR family. Mg(2+) serves as cofactor. Mn(2+) is required as a cofactor.

It catalyses the reaction 2-C-methyl-D-erythritol 4-phosphate + NADP(+) = 1-deoxy-D-xylulose 5-phosphate + NADPH + H(+). The protein operates within isoprenoid biosynthesis; isopentenyl diphosphate biosynthesis via DXP pathway; isopentenyl diphosphate from 1-deoxy-D-xylulose 5-phosphate: step 1/6. In terms of biological role, catalyzes the NADPH-dependent rearrangement and reduction of 1-deoxy-D-xylulose-5-phosphate (DXP) to 2-C-methyl-D-erythritol 4-phosphate (MEP). The chain is 1-deoxy-D-xylulose 5-phosphate reductoisomerase from Clostridium perfringens (strain SM101 / Type A).